Here is a 277-residue protein sequence, read N- to C-terminus: Digeranylgeranylglyceryl phosphate synthase (277 aa).

7 helical membrane passes run 16–36 (ILAG…IPSI), 40–60 (GLVF…NDYF), 101–121 (FLGV…FIYA), 129–149 (FIGN…GALG), 153–173 (VGLA…REIM), 205–225 (IFGV…IGLG), and 257–277 (LKIA…TKGV).

The protein belongs to the UbiA prenyltransferase family. DGGGP synthase subfamily. Mg(2+) is required as a cofactor.

It localises to the cell membrane. It catalyses the reaction sn-3-O-(geranylgeranyl)glycerol 1-phosphate + (2E,6E,10E)-geranylgeranyl diphosphate = 2,3-bis-O-(geranylgeranyl)-sn-glycerol 1-phosphate + diphosphate. The protein operates within membrane lipid metabolism; glycerophospholipid metabolism. In terms of biological role, prenyltransferase that catalyzes the transfer of the geranylgeranyl moiety of geranylgeranyl diphosphate (GGPP) to the C2 hydroxyl of (S)-3-O-geranylgeranylglyceryl phosphate (GGGP). This reaction is the second ether-bond-formation step in the biosynthesis of archaeal membrane lipids. The sequence is that of Digeranylgeranylglyceryl phosphate synthase from Pyrococcus abyssi (strain GE5 / Orsay).